The primary structure comprises 392 residues: Succinyl-diaminopimelate desuccinylase (392 aa).

Histidine 77 is a binding site for Zn(2+). Residue aspartate 79 is part of the active site. Aspartate 110 lines the Zn(2+) pocket. Glutamate 144 serves as the catalytic Proton acceptor. Zn(2+)-binding residues include glutamate 145, glutamate 173, and histidine 359.

Belongs to the peptidase M20A family. DapE subfamily. In terms of assembly, homodimer. It depends on Zn(2+) as a cofactor. Co(2+) is required as a cofactor.

It carries out the reaction N-succinyl-(2S,6S)-2,6-diaminopimelate + H2O = (2S,6S)-2,6-diaminopimelate + succinate. It participates in amino-acid biosynthesis; L-lysine biosynthesis via DAP pathway; LL-2,6-diaminopimelate from (S)-tetrahydrodipicolinate (succinylase route): step 3/3. In terms of biological role, catalyzes the hydrolysis of N-succinyl-L,L-diaminopimelic acid (SDAP), forming succinate and LL-2,6-diaminopimelate (DAP), an intermediate involved in the bacterial biosynthesis of lysine and meso-diaminopimelic acid, an essential component of bacterial cell walls. This Thiobacillus denitrificans (strain ATCC 25259 / T1) protein is Succinyl-diaminopimelate desuccinylase.